A 318-amino-acid chain; its full sequence is Cyclic AMP receptor-like protein F (318 aa).

Residues 1–3 (MKD) lie on the Extracellular side of the membrane. The chain crosses the membrane as a helical span at residues 4–24 (IILIYMICAPISMIGSLFIII). Residues 25–38 (TWLLYAKLKNSGSN) lie on the Cytoplasmic side of the membrane. A helical membrane pass occupies residues 39–59 (FIFFQAISDFFFTSKYIITII). Topologically, residues 60 to 83 (FYYINIPQFSDETSSTDTNPYCFS) are extracellular. A disulfide bond links Cys-81 and Cys-177. A helical transmembrane segment spans residues 84-104 (LGLFSQFFGQATIMWSYTMTV). Over 105-145 (KVFHSYFEMKKKNNNNNIGSNNIGGGGGGNNSNKQNSIDKT) the chain is Cytoplasmic. Residues 146 to 166 (LKWYHLFVWGFCLVNATIIGI) traverse the membrane as a helical segment. Over 167-187 (SKQYGPSSTGCWIVGANNPYR) the chain is Extracellular. The helical transmembrane segment at 188 to 208 (FFELVPLYFTITTSIIILILI) threads the bilayer. Residues 209–234 (LVKMKKSKPSSLLPTESMRYNQQARE) are Cytoplasmic-facing. Residues 235–255 (FKIQLMKFVLIFIIFWLPATV) traverse the membrane as a helical segment. Residues 256–267 (LRTLEYFGIEKT) lie on the Extracellular side of the membrane. The chain crosses the membrane as a helical span at residues 268-288 (FFILLDAVSVSLQALANSLVW). The Cytoplasmic segment spans residues 289-318 (ATSPQFLKLMKRKVVNKPNKQMEREYLINK).

This sequence belongs to the G-protein coupled receptor 5 family.

Its subcellular location is the membrane. In terms of biological role, receptor for cAMP. The protein is Cyclic AMP receptor-like protein F (crlF) of Dictyostelium discoideum (Social amoeba).